Reading from the N-terminus, the 567-residue chain is MSTSVFNRRWAALLLEALTRHGVRHICIAPGSRSTPLTLAAAANPSLVCHTHFDERGLGHLALGLAKASTEPVAVIVTSGTAVANLYPALIEAGLTGERLILLTADRPPELIDCGANQAIRQQGLFASHPTLSVNLPRPTPDISARWLVSTLDSAMAQLQHGALHINCPFAEPLYGGDEQQYADWSASLGDWWQDCHPWLRQTCYPPSLYQPPAQQADWFFWRQKRGVVIAGRMGAQEGRQLTAWAAMLGWPLIGDVLSQTGQPLPCADLWLAHPRAQETLAQAQMVLQFGSSLTSKRLLQWQTACQPQEYWLVDSAPGRLDPANHRGRRIICPVGEWLSRHPAQRRTPWATELAAYSESAQAQVIETLAGQFSEAAVAHQLAELLPDNGQLFVGNSLIVRLIDALGQLPAGYPVYSNRGASGIDGLLSTAAGVQRATAKPTLAIVGDLSALYDLNALALLRQSSAPMVLLVINNNGGQIFSLLPTPEAERQRFYCMPQDVNFEHAAVMFSLGYARPNSWPQLRELVHQCWLRGGTTLIEVQVPPSQGAETLQQLVQQVTLIPQVAP.

Belongs to the TPP enzyme family. MenD subfamily. Homodimer. It depends on Mg(2+) as a cofactor. Mn(2+) is required as a cofactor. Requires thiamine diphosphate as cofactor.

It carries out the reaction isochorismate + 2-oxoglutarate + H(+) = 5-enolpyruvoyl-6-hydroxy-2-succinyl-cyclohex-3-ene-1-carboxylate + CO2. It functions in the pathway quinol/quinone metabolism; 1,4-dihydroxy-2-naphthoate biosynthesis; 1,4-dihydroxy-2-naphthoate from chorismate: step 2/7. It participates in quinol/quinone metabolism; menaquinone biosynthesis. Functionally, catalyzes the thiamine diphosphate-dependent decarboxylation of 2-oxoglutarate and the subsequent addition of the resulting succinic semialdehyde-thiamine pyrophosphate anion to isochorismate to yield 2-succinyl-5-enolpyruvyl-6-hydroxy-3-cyclohexene-1-carboxylate (SEPHCHC). The chain is 2-succinyl-5-enolpyruvyl-6-hydroxy-3-cyclohexene-1-carboxylate synthase from Yersinia pestis bv. Antiqua (strain Angola).